We begin with the raw amino-acid sequence, 284 residues long: Tropomyosin (284 aa).

Positions 1 to 284 form a coiled coil; sequence MDAIKKKMQA…DQTFAEIAGY (284 aa). Residues 103–133 form a disordered region; it reads EEKLATTTEKLEEASKAADESERNRKVLEGR.

Belongs to the tropomyosin family. In terms of assembly, homodimer.

Tropomyosin, in association with the troponin complex, plays a central role in the calcium dependent regulation of muscle contraction. The chain is Tropomyosin from Chlamys nipponensis akazara (Akazara scallop).